The chain runs to 504 residues: Maturase K (504 aa).

The protein belongs to the intron maturase 2 family. MatK subfamily.

It is found in the plastid. The protein localises to the chloroplast. Its function is as follows. Usually encoded in the trnK tRNA gene intron. Probably assists in splicing its own and other chloroplast group II introns. The sequence is that of Maturase K from Rorippa amphibia (Great yellow-cress).